The sequence spans 451 residues: Heme sensor protein HssS (451 aa).

Transmembrane regions (helical) follow at residues 9–29 (IAIY…LFTN) and 164–184 (IFLA…VIAS). The region spanning 186–238 (YSIIKPVTALKNATTRIMKGDFSTPIKQTRHDEIGTLQSRFNTMRQNLGQVDQ) is the HAMP domain. The region spanning 246–451 (NVSHEIKTPL…KTQFIVKLFI (206 aa)) is the Histidine kinase domain. H249 carries the post-translational modification Phosphohistidine; by autocatalysis.

Post-translationally, autophosphorylated.

The protein localises to the cell membrane. The catalysed reaction is ATP + protein L-histidine = ADP + protein N-phospho-L-histidine.. In terms of biological role, member of the two-component regulatory system HssS/HssR involved in intracellular heme homeostasis and tempering of staphylococcal virulence. HssS functions as a heme sensor histidine kinase which is autophosphorylated at a histidine residue and transfers its phosphate group to an aspartate residue of HssR. HssR/HssS activates the expression of HrtAB, an efflux pump, in response to extracellular heme, hemin, hemoglobin or blood. The sequence is that of Heme sensor protein HssS (hssS) from Staphylococcus epidermidis (strain ATCC 12228 / FDA PCI 1200).